Here is an 880-residue protein sequence, read N- to C-terminus: Paramyosin (880 aa).

Residues 1 to 34 (MSGSLYRSPSAALYKSPSMSAFGGLPAAFGSMSV) are nonhelical region. Positions 35–859 (ADLGSLTRLE…LIRAKHRHQL (825 aa)) form a coiled coil. Residues 860–880 (LRAKMLQRQKFTFSKMSNRDN) are nonhelical region.

The protein belongs to the paramyosin family. In terms of assembly, homodimer.

The protein localises to the cytoplasm. Its subcellular location is the myofibril. Functionally, paramyosin is a major structural component of many thick filaments isolated from invertebrate muscles. This Brugia malayi (Filarial nematode worm) protein is Paramyosin.